Here is a 1561-residue protein sequence, read N- to C-terminus: Sterile alpha motif domain-containing protein 9-like (1561 aa).

In terms of domain architecture, SAM spans 14–79 (WTKEHVRKWV…RMYNKLISSP (66 aa)). The segment at 78–157 (SPESHNQDSR…DNKPKPEQMS (80 aa)) is disordered. Basic and acidic residues-rich tracts occupy residues 82–107 (HNQD…KNEE) and 142–153 (VTKDMEDNKPKP).

As to quaternary structure, interacts with EEA1.

Its subcellular location is the early endosome. The protein resides in the mitochondrion. In terms of biological role, may be involved in endosome fusion. Mediates down-regulation of growth factor signaling via internalization of growth factor receptors. In Mus musculus (Mouse), this protein is Sterile alpha motif domain-containing protein 9-like (Samd9l).